Reading from the N-terminus, the 456-residue chain is Alcohol acyltransferase 1 (456 aa).

Residues His-166 and Asp-382 each act as proton acceptor in the active site.

This sequence belongs to the plant acyltransferase family. As to expression, expressed in fruit.

The catalysed reaction is 3-(methylsulfanyl)propanoyl-CoA + butan-1-ol = butyl 3-(methylsulfanyl)propanoate + CoA. It carries out the reaction ethanol + benzoyl-CoA = ethyl benzoate + CoA. It catalyses the reaction butan-1-ol + benzoyl-CoA = butyl benzoate + CoA. The enzyme catalyses 2-(methylsulfanyl)acetyl-CoA + butan-1-ol = butyl 2-(methylsulfanyl)acetate + CoA. Involved in the biosynthesis of volatile esters which confer kiwifruit flavor. Alcohol acyl transferase that can use a wide range of alcohols as substrate to produce esters. Exhibits benzoyl-CoA:alcohol O-acyltransferase activity. This Actinidia deliciosa (Kiwi) protein is Alcohol acyltransferase 1.